The sequence spans 151 residues: Large ribosomal subunit protein uL22 (151 aa).

Positions 1–25 (MARINYSVKEDPETTSKAMGSELHI) are disordered.

Belongs to the universal ribosomal protein uL22 family. As to quaternary structure, part of the 50S ribosomal subunit.

This protein binds specifically to 23S rRNA. It makes multiple contacts with different domains of the 23S rRNA in the assembled 50S subunit and ribosome. Functionally, the globular domain of the protein is located near the polypeptide exit tunnel on the outside of the subunit, while an extended beta-hairpin is found that lines the wall of the exit tunnel in the center of the 70S ribosome. The chain is Large ribosomal subunit protein uL22 from Methanosarcina barkeri (strain Fusaro / DSM 804).